Reading from the N-terminus, the 1182-residue chain is Receptor-type guanylate cyclase gcy-19 (1182 aa).

An N-terminal signal peptide occupies residues 1-24 (MEYLLFLLLFAGFLTFLPRFLIYA). Residues 25-507 (QITSSTTTTT…PQSFVDQYGA (483 aa)) lie on the Extracellular side of the membrane. Asn91, Asn369, Asn430, and Asn453 each carry an N-linked (GlcNAc...) asparagine glycan. The chain crosses the membrane as a helical span at residues 508-528 (LVFAIGGVLIFAMLFVITCFF). Over 529-1182 (YVMRQKRLER…FRRQETLALI (654 aa)) the chain is Cytoplasmic. In terms of domain architecture, Protein kinase spans 562-849 (RMSKRSLQSG…KGNLMDHVFN (288 aa)). The region spanning 907–1037 (TVFFSDVVKF…DTVNTASRME (131 aa)) is the Guanylate cyclase domain. Residues 1094–1164 (VSSNSGYQSD…EAKARDIHNE (71 aa)) are disordered. Positions 1142–1152 (SPTLSKRSVSP) are enriched in low complexity.

Belongs to the adenylyl cyclase class-4/guanylyl cyclase family. Expressed in IL2 sensory neurons.

Its subcellular location is the cell membrane. The enzyme catalyses GTP = 3',5'-cyclic GMP + diphosphate. Functionally, guanylate cyclase involved in the production of the second messenger cGMP. The chain is Receptor-type guanylate cyclase gcy-19 from Caenorhabditis elegans.